The sequence spans 127 residues: Large ribosomal subunit protein uL24A (127 aa).

It belongs to the universal ribosomal protein uL24 family. As to quaternary structure, component of the large ribosomal subunit (LSU). Mature yeast ribosomes consist of a small (40S) and a large (60S) subunit. The 40S small subunit contains 1 molecule of ribosomal RNA (18S rRNA) and 33 different proteins (encoded by 57 genes). The large 60S subunit contains 3 rRNA molecules (25S, 5.8S and 5S rRNA) and 46 different proteins (encoded by 81 genes).

The protein localises to the cytoplasm. Component of the ribosome, a large ribonucleoprotein complex responsible for the synthesis of proteins in the cell. The small ribosomal subunit (SSU) binds messenger RNAs (mRNAs) and translates the encoded message by selecting cognate aminoacyl-transfer RNA (tRNA) molecules. The large subunit (LSU) contains the ribosomal catalytic site termed the peptidyl transferase center (PTC), which catalyzes the formation of peptide bonds, thereby polymerizing the amino acids delivered by tRNAs into a polypeptide chain. The nascent polypeptides leave the ribosome through a tunnel in the LSU and interact with protein factors that function in enzymatic processing, targeting, and the membrane insertion of nascent chains at the exit of the ribosomal tunnel. The sequence is that of Large ribosomal subunit protein uL24A from Saccharomyces cerevisiae (strain ATCC 204508 / S288c) (Baker's yeast).